The following is a 739-amino-acid chain: Ent-kaurene synthase-like 3 (739 aa).

Mg(2+)-binding residues include Asp475, Asp479, Asn619, Thr623, and Glu627. Positions 475–479 (DDFFD) match the DDXXD motif motif.

This sequence belongs to the terpene synthase family. It depends on Mg(2+) as a cofactor. As to expression, expressed in roots and stems.

The chain is Ent-kaurene synthase-like 3 (KSL3) from Oryza sativa subsp. japonica (Rice).